Consider the following 561-residue polypeptide: Cloacin (561 aa).

3 stretches are compositionally biased toward gly residues: residues 1–21, 29–40, and 66–91; these read MSGG…GGQA, SGKGGPSSGGGT, and FGNG…GGGQ. 5 disordered regions span residues 1 to 93, 254 to 273, 304 to 326, 432 to 507, and 530 to 561; these read MSGG…GQSS, PKGI…TAGG, VKQR…PEEG, KAAL…KRAR, and RASD…KKYL. The interval 1 to 180 is involved in the translocation of the protein across the cell membrane; that stretch reads MSGGDGRGPG…DTVTETPAST (180 aa). Residues 200-420 are responsible for the receptor binding activity; that stretch reads DERQHIAVVA…NAKLKAAQAS (221 aa). 2 stretches are compositionally biased toward basic and acidic residues: residues 306–326 and 440–494; these read QRQE…PEEG and ESRK…EGKP. A ribonuclease activity region spans residues 421-561; it reads LNAMNDALSR…DPKRNIKKYL (141 aa). Positions 540-561 are binding of immunity protein; sequence FDPKTGKQVKGPDPKRNIKKYL.

It belongs to the cloacin colicin family.

Functionally, inactivates ribosomes by hydrolyzing 16S RNA in 30S ribosomes at a specific site. Colicins are polypeptide toxins produced by and active against E.coli and closely related bacteria. In Escherichia coli, this protein is Cloacin (ccl).